The sequence spans 90 residues: Acylphosphatase (90 aa).

In terms of domain architecture, Acylphosphatase-like spans Ala3 to Gly90. Residues Arg18 and Asn36 contribute to the active site.

It belongs to the acylphosphatase family.

The catalysed reaction is an acyl phosphate + H2O = a carboxylate + phosphate + H(+). The sequence is that of Acylphosphatase (acyP) from Leuconostoc mesenteroides subsp. mesenteroides (strain ATCC 8293 / DSM 20343 / BCRC 11652 / CCM 1803 / JCM 6124 / NCDO 523 / NBRC 100496 / NCIMB 8023 / NCTC 12954 / NRRL B-1118 / 37Y).